A 316-amino-acid polypeptide reads, in one-letter code: Olfactory receptor 56B2 (316 aa).

Over 1-32 the chain is Extracellular; sequence MVLQELRDSNSSKFQVSEFILMGFPGIHSWQH. Asparagine 10 is a glycosylation site (N-linked (GlcNAc...) asparagine). A helical membrane pass occupies residues 33–53; the sequence is WLSLPLALLYLLALSANILIL. Residues 54–61 lie on the Cytoplasmic side of the membrane; that stretch reads IIINKEAA. The chain crosses the membrane as a helical span at residues 62 to 82; it reads LHQPMYYFLGILAMADIGLAT. The Extracellular portion of the chain corresponds to 83–106; the sequence is TIMPKILAILWFNAKTISLLECFA. Cysteine 104 and cysteine 196 are disulfide-bonded. A helical membrane pass occupies residues 107–127; sequence QMYAIHCFVAMESSTFVCMAI. Residues 128 to 146 lie on the Cytoplasmic side of the membrane; that stretch reads DRYVAICRPLRYPSIITES. The chain crosses the membrane as a helical span at residues 147-167; sequence FVFKANGFMALRNSLCLISVP. At 168 to 203 the chain is on the extracellular side; that stretch reads LLAAQRHYCSQNQIEHCLCSNLGVTSLSCDDRRINS. The helical transmembrane segment at 204-224 threads the bilayer; that stretch reads INQVLLAWTLMGSDLGLIILS. The Cytoplasmic portion of the chain corresponds to 225–244; sequence YALILYSVLKLNSPEAASKA. The helical transmembrane segment at 245–265 threads the bilayer; it reads LSTCTSHLILILFFYTVIIVI. Residues 266–279 lie on the Extracellular side of the membrane; sequence SITRSTGMRVPLIP. A helical transmembrane segment spans residues 280 to 300; sequence VLLNVLHNVIPPALNPMVYAL. Residues 301–316 are Cytoplasmic-facing; sequence KNKELRQGLYKVLRLE.

The protein belongs to the G-protein coupled receptor 1 family.

The protein localises to the cell membrane. Functionally, odorant receptor. This Homo sapiens (Human) protein is Olfactory receptor 56B2.